The following is a 406-amino-acid chain: 5-methylthioadenosine/S-adenosylhomocysteine deaminase (406 aa).

Zn(2+) is bound by residues histidine 55 and histidine 57. Substrate is bound by residues glutamate 84, arginine 136, arginine 148, and histidine 173. Histidine 200 lines the Zn(2+) pocket. 2 residues coordinate substrate: glutamate 203 and aspartate 279. Aspartate 279 is a binding site for Zn(2+).

The protein belongs to the metallo-dependent hydrolases superfamily. MTA/SAH deaminase family. Requires Zn(2+) as cofactor.

The catalysed reaction is S-adenosyl-L-homocysteine + H2O + H(+) = S-inosyl-L-homocysteine + NH4(+). It catalyses the reaction S-methyl-5'-thioadenosine + H2O + H(+) = S-methyl-5'-thioinosine + NH4(+). Its function is as follows. Catalyzes the deamination of 5-methylthioadenosine and S-adenosyl-L-homocysteine into 5-methylthioinosine and S-inosyl-L-homocysteine, respectively. Is also able to deaminate adenosine. Adenosine-5-monophosphate (AMP) and S-adenosyl-L-methionine (SAM) are not enzyme substrates. This chain is 5-methylthioadenosine/S-adenosylhomocysteine deaminase (mtaD), found in Thermotoga maritima (strain ATCC 43589 / DSM 3109 / JCM 10099 / NBRC 100826 / MSB8).